Here is a 157-residue protein sequence, read N- to C-terminus: Crossover junction endodeoxyribonuclease RuvC (157 aa).

Active-site residues include Asp-7, Glu-66, and Asp-139. Residues Asp-7, Glu-66, and Asp-139 each contribute to the Mg(2+) site.

It belongs to the RuvC family. Homodimer which binds Holliday junction (HJ) DNA. The HJ becomes 2-fold symmetrical on binding to RuvC with unstacked arms; it has a different conformation from HJ DNA in complex with RuvA. In the full resolvosome a probable DNA-RuvA(4)-RuvB(12)-RuvC(2) complex forms which resolves the HJ. Requires Mg(2+) as cofactor.

Its subcellular location is the cytoplasm. The enzyme catalyses Endonucleolytic cleavage at a junction such as a reciprocal single-stranded crossover between two homologous DNA duplexes (Holliday junction).. The RuvA-RuvB-RuvC complex processes Holliday junction (HJ) DNA during genetic recombination and DNA repair. Endonuclease that resolves HJ intermediates. Cleaves cruciform DNA by making single-stranded nicks across the HJ at symmetrical positions within the homologous arms, yielding a 5'-phosphate and a 3'-hydroxyl group; requires a central core of homology in the junction. The consensus cleavage sequence is 5'-(A/T)TT(C/G)-3'. Cleavage occurs on the 3'-side of the TT dinucleotide at the point of strand exchange. HJ branch migration catalyzed by RuvA-RuvB allows RuvC to scan DNA until it finds its consensus sequence, where it cleaves and resolves the cruciform DNA. The protein is Crossover junction endodeoxyribonuclease RuvC of Helicobacter pylori (strain ATCC 700392 / 26695) (Campylobacter pylori).